A 445-amino-acid polypeptide reads, in one-letter code: Guanosine nucleotide diphosphate dissociation inhibitor At5g09550 (445 aa).

The protein belongs to the Rab GDI family.

Regulates the GDP/GTP exchange reaction of most RAB proteins by inhibiting the dissociation of GDP from them, and the subsequent binding of GTP. The protein is Guanosine nucleotide diphosphate dissociation inhibitor At5g09550 of Arabidopsis thaliana (Mouse-ear cress).